The following is a 1030-amino-acid chain: Teashirt homolog 2 (1030 aa).

Positions 1–120 are disordered; sequence MPRRKQQAPK…THPKLPSEPH (120 aa). Residues 11-42 adopt a coiled-coil conformation; sequence RAAGYAQEEVLKEEEEIKEEEEEEEDSGSVAQ. The segment covering 21 to 37 has biased composition (acidic residues); the sequence is LKEEEEIKEEEEEEEDS. 2 stretches are compositionally biased toward polar residues: residues 39–49 and 66–95; these read SVAQHQSSNDT and SCQN…QVSD. Basic and acidic residues predominate over residues 103 to 120; sequence DVSDKKANTHPKLPSEPH. Lys189 is covalently cross-linked (Glycyl lysine isopeptide (Lys-Gly) (interchain with G-Cter in SUMO2)). C2H2-type zinc fingers lie at residues 216–240 and 276–300; these read FRCR…ETGH and LKCM…KTKH. The segment at 240-266 is disordered; that stretch reads HYQDDNRKKDKLRPTSYSKPRKRAFQD. Glycyl lysine isopeptide (Lys-Gly) (interchain with G-Cter in SUMO2) cross-links involve residues Lys307 and Lys316. The disordered stretch occupies residues 328 to 348; that stretch reads VNRPCSPDSTTGSLADSFSSQ. Over residues 334 to 348 the composition is skewed to polar residues; that stretch reads PDSTTGSLADSFSSQ. Residues 381–405 form a C2H2-type 3; atypical zinc finger; that stretch reads LKCMECGSSHDTLQQLTTHMMVTGH. A Glycyl lysine isopeptide (Lys-Gly) (interchain with G-Cter in SUMO2) cross-link involves residue Lys418. Over residues 432-459 the composition is skewed to polar residues; the sequence is SLSETPNSESLAPKPSSNSPSECTASTT. Positions 432 to 488 are disordered; it reads SLSETPNSESLAPKPSSNSPSECTASTTELKKESKKEKGEGIEDEQGVKSEDYEDSL. The segment covering 460–482 has biased composition (basic and acidic residues); the sequence is ELKKESKKEKGEGIEDEQGVKSE. Glycyl lysine isopeptide (Lys-Gly) (interchain with G-Cter in SUMO2) cross-links involve residues Lys462, Lys480, Lys497, and Lys601. 2 stretches are compositionally biased toward basic and acidic residues: residues 608-623 and 633-664; these read DEVV…HEEA and SFSK…KPEP. Disordered regions lie at residues 608–687, 703–726, and 759–784; these read DEVV…LPSI, KATE…VFHK, and QPID…SPPQ. Residue Lys652 forms a Glycyl lysine isopeptide (Lys-Gly) (interchain with G-Cter in SUMO2) linkage. Residues 710-722 are compositionally biased toward low complexity; sequence SPSCSSPNSSTSP. The segment covering 773-783 has biased composition (polar residues); that stretch reads SSQAQSCTSPP. Residues Lys796 and Lys816 each participate in a glycyl lysine isopeptide (Lys-Gly) (interchain with G-Cter in SUMO2) cross-link. The homeobox DNA-binding region spans 837 to 907; sequence RKGRQSNWNP…NVKYQLRKTG (71 aa). Residues 922–944 form a C2H2-type 4 zinc finger; that stretch reads FYCSDCASQFRTPSTYISHLESH. Residue Lys962 forms a Glycyl lysine isopeptide (Lys-Gly) (interchain with G-Cter in SUMO2) linkage. Disordered stretches follow at residues 965 to 987 and 1009 to 1030; these read QEIS…EDTD and LSKT…VDEE. The segment covering 968-977 has biased composition (polar residues); the sequence is SRVSSAQRSP. Phosphoserine is present on Ser976. A C2H2-type 5 zinc finger spans residues 990 to 1013; it reads FKCKLCRRTFVSKHAVKLHLSKTH.

It belongs to the teashirt C2H2-type zinc-finger protein family. Interacts (via homeobox domain) with APBB1 (via PID domain 1). Sumoylated.

The protein localises to the nucleus. Probable transcriptional regulator involved in developmental processes. May act as a transcriptional repressor (Potential). This Mus musculus (Mouse) protein is Teashirt homolog 2 (Tshz2).